Reading from the N-terminus, the 565-residue chain is NAD-dependent malic enzyme (565 aa).

Tyrosine 104 (proton donor) is an active-site residue. Arginine 157 serves as a coordination point for NAD(+). Lysine 175 (proton acceptor) is an active-site residue. A divalent metal cation-binding residues include glutamate 246, aspartate 247, and aspartate 270. 2 residues coordinate NAD(+): aspartate 270 and asparagine 418.

This sequence belongs to the malic enzymes family. In terms of assembly, homotetramer. Requires Mg(2+) as cofactor. Mn(2+) serves as cofactor.

The catalysed reaction is (S)-malate + NAD(+) = pyruvate + CO2 + NADH. It carries out the reaction oxaloacetate + H(+) = pyruvate + CO2. This is NAD-dependent malic enzyme from Shigella flexneri serotype 5b (strain 8401).